The following is a 443-amino-acid chain: Ribosomal protein uS12 methylthiotransferase RimO (443 aa).

The MTTase N-terminal domain maps to 5 to 116; it reads PSVAVAHLGC…IVDVIQRAEA (112 aa). [4Fe-4S] cluster-binding residues include Cys-14, Cys-50, Cys-79, Cys-154, Cys-158, and Cys-161. A Radical SAM core domain is found at 140–370; that stretch reads TTTEGTAYVR…ALQQPISWQQ (231 aa). The TRAM domain maps to 372 to 442; the sequence is QQEVGKTVQV…AYDLQGQLVS (71 aa).

Belongs to the methylthiotransferase family. RimO subfamily. The cofactor is [4Fe-4S] cluster.

The protein localises to the cytoplasm. It catalyses the reaction L-aspartate(89)-[ribosomal protein uS12]-hydrogen + (sulfur carrier)-SH + AH2 + 2 S-adenosyl-L-methionine = 3-methylsulfanyl-L-aspartate(89)-[ribosomal protein uS12]-hydrogen + (sulfur carrier)-H + 5'-deoxyadenosine + L-methionine + A + S-adenosyl-L-homocysteine + 2 H(+). Catalyzes the methylthiolation of an aspartic acid residue of ribosomal protein uS12. This chain is Ribosomal protein uS12 methylthiotransferase RimO, found in Acaryochloris marina (strain MBIC 11017).